Consider the following 315-residue polypeptide: tRNA pseudouridine synthase B (315 aa).

D54 serves as the catalytic Nucleophile.

Belongs to the pseudouridine synthase TruB family. Type 1 subfamily.

It carries out the reaction uridine(55) in tRNA = pseudouridine(55) in tRNA. Its function is as follows. Responsible for synthesis of pseudouridine from uracil-55 in the psi GC loop of transfer RNAs. In Cupriavidus pinatubonensis (strain JMP 134 / LMG 1197) (Cupriavidus necator (strain JMP 134)), this protein is tRNA pseudouridine synthase B.